A 548-amino-acid chain; its full sequence is NAD(P)H-quinone oxidoreductase chain 4 (548 aa).

A run of 14 helical transmembrane segments spans residues 17 to 37, 48 to 68, 103 to 123, 127 to 147, 149 to 169, 181 to 201, 222 to 242, 256 to 276, 290 to 310, 327 to 347, 348 to 368, 389 to 409, 430 to 450, and 477 to 497; these read VPWLSLSILVPIGGALLIPFI, WYALIVTLITFLITVAAYLTG, LILLTSFITSLACLAAWPVTF, LFFFLLLAMDGGQIAVFAVQD, LLFFLAWELELLPVYLLLAIW, FILYTAGSSLFILLAALAMGF, GFQLLCYAGLLIAFGVKLPIV, TAPVHMLLAGILLKMGGYALL, FAPLLIVLGVVNIIYAALTSF, MGFVLIGIGSFSVLGSSGAML, QMISHGLIGASLFFLVGATYD, FALWTVCALASLALPGMSGFV, VVICGLAAVGVVLTPVYLLSM, and VYIIGCLLVPIIGIGLYPRLM.

Belongs to the complex I subunit 4 family.

It is found in the cellular thylakoid membrane. The enzyme catalyses a plastoquinone + NADH + (n+1) H(+)(in) = a plastoquinol + NAD(+) + n H(+)(out). The catalysed reaction is a plastoquinone + NADPH + (n+1) H(+)(in) = a plastoquinol + NADP(+) + n H(+)(out). NDH-1 shuttles electrons from NAD(P)H, via FMN and iron-sulfur (Fe-S) centers, to quinones in the respiratory chain. The immediate electron acceptor for the enzyme in this species is believed to be plastoquinone. Couples the redox reaction to proton translocation (for every two electrons transferred, four hydrogen ions are translocated across the cytoplasmic membrane), and thus conserves the redox energy in a proton gradient. The polypeptide is NAD(P)H-quinone oxidoreductase chain 4 (Synechococcus sp. (strain CC9902)).